The sequence spans 175 residues: ATP-dependent protease subunit HslV (175 aa).

Residue threonine 2 is part of the active site. Positions 158, 161, and 164 each coordinate Na(+).

Belongs to the peptidase T1B family. HslV subfamily. As to quaternary structure, a double ring-shaped homohexamer of HslV is capped on each side by a ring-shaped HslU homohexamer. The assembly of the HslU/HslV complex is dependent on binding of ATP.

It is found in the cytoplasm. The catalysed reaction is ATP-dependent cleavage of peptide bonds with broad specificity.. Allosterically activated by HslU binding. Functionally, protease subunit of a proteasome-like degradation complex believed to be a general protein degrading machinery. This chain is ATP-dependent protease subunit HslV, found in Haemophilus influenzae (strain PittEE).